A 209-amino-acid polypeptide reads, in one-letter code: Probable GTP-binding protein EngB (209 aa).

The 175-residue stretch at 27–201 (SGVEIAFAGR…ATKLDSWFAE (175 aa)) folds into the EngB-type G domain. GTP-binding positions include 35–42 (GRSNAGKS), 62–66 (GRTQL), 80–83 (DLPG), 147–150 (TKAD), and 180–182 (YSA). Ser-42 and Thr-64 together coordinate Mg(2+).

The protein belongs to the TRAFAC class TrmE-Era-EngA-EngB-Septin-like GTPase superfamily. EngB GTPase family. Requires Mg(2+) as cofactor.

Its function is as follows. Necessary for normal cell division and for the maintenance of normal septation. In Glaesserella parasuis serovar 5 (strain SH0165) (Haemophilus parasuis), this protein is Probable GTP-binding protein EngB.